We begin with the raw amino-acid sequence, 142 residues long: Large ribosomal subunit protein uL11 (142 aa).

This sequence belongs to the universal ribosomal protein uL11 family. As to quaternary structure, part of the ribosomal stalk of the 50S ribosomal subunit. Interacts with L10 and the large rRNA to form the base of the stalk. L10 forms an elongated spine to which L12 dimers bind in a sequential fashion forming a multimeric L10(L12)X complex. In terms of processing, one or more lysine residues are methylated.

Forms part of the ribosomal stalk which helps the ribosome interact with GTP-bound translation factors. The chain is Large ribosomal subunit protein uL11 from Klebsiella pneumoniae (strain 342).